The chain runs to 227 residues: C4-dicarboxylate TRAP transporter small permease protein DctQ (227 aa).

At M1 to R7 the chain is on the cytoplasmic side. A helical transmembrane segment spans residues A8–V28. Topologically, residues T29–N67 are periplasmic. Residues L68–A88 form a helical membrane-spanning segment. At Y89–R112 the chain is on the cytoplasmic side. A helical membrane pass occupies residues F113–G133. Over A134–D149 the chain is Periplasmic. A helical membrane pass occupies residues L150–F170. At R171 to N227 the chain is on the cytoplasmic side.

This sequence belongs to the TRAP transporter small permease family. As to quaternary structure, the complex comprises the extracytoplasmic solute receptor protein DctP, and the two transmembrane proteins DctQ and DctM.

It localises to the cell inner membrane. In terms of biological role, part of the tripartite ATP-independent periplasmic (TRAP) transport system DctPQM involved in C4-dicarboxylates uptake. This Rhodobacter capsulatus (Rhodopseudomonas capsulata) protein is C4-dicarboxylate TRAP transporter small permease protein DctQ.